The following is a 435-amino-acid chain: MPALRRLFALLSDLRLAILLLLLIAGASALGTILPQNEAPDLYLERFNADPWLGMINGEQMLQLQLDSIYSSVWFLSLLAWLGLALILCSWRRQWPALLATTRWIDYRQPRQLSKLALAESILCSNGESALDTLSEELQKQGWQVQRNEDRLAARRGVIGKVGPLLVHTGLVLLLIGAAWGALSGNRLERFLAPGRALDLLDPSGNNRLSLTLERFAIERDPAGRTEQFRSTLRLDPPGGPSEQRMISVNHPLRYRGMTVYQADWSLAAITVQIGKSPELQLPLRSFPELGEQIWGLVLPTRPDGSEPVLMSTSSEQGPVQVFDADGSLLGNLRPGGASTEIKGLPLRVANIMPASGLLLKRDPGVPLVYAGFAITLLGGGLSLIATRQLWAVLDPAPFQPSNRKLHIGGLCNRNLAGLAAELPRLISRVDESRD.

A run of 3 helical transmembrane segments spans residues 14–34, 72–92, and 162–182; these read LRLAILLLLLIAGASALGTIL, SVWFLSLLAWLGLALILCSWR, and VGPLLVHTGLVLLLIGAAWGA.

This sequence belongs to the Ccs1/CcsB family. May interact with CcsA.

It localises to the cellular thylakoid membrane. Required during biogenesis of c-type cytochromes (cytochrome c6 and cytochrome f) at the step of heme attachment. This chain is Cytochrome c biogenesis protein CcsB, found in Synechococcus sp. (strain CC9311).